We begin with the raw amino-acid sequence, 353 residues long: S-adenosylmethionine:tRNA ribosyltransferase-isomerase (353 aa).

Belongs to the QueA family. As to quaternary structure, monomer.

The protein resides in the cytoplasm. It carries out the reaction 7-aminomethyl-7-carbaguanosine(34) in tRNA + S-adenosyl-L-methionine = epoxyqueuosine(34) in tRNA + adenine + L-methionine + 2 H(+). It functions in the pathway tRNA modification; tRNA-queuosine biosynthesis. Transfers and isomerizes the ribose moiety from AdoMet to the 7-aminomethyl group of 7-deazaguanine (preQ1-tRNA) to give epoxyqueuosine (oQ-tRNA). This chain is S-adenosylmethionine:tRNA ribosyltransferase-isomerase, found in Baumannia cicadellinicola subsp. Homalodisca coagulata.